The sequence spans 948 residues: UvrABC system protein A (948 aa).

Residue Gly-31 to Ser-38 coordinates ATP. The C4-type zinc-finger motif lies at Cys-249–Cys-277. ABC transporter domains are found at residues Trp-307–Leu-586 and Gly-606–Lys-934. Gly-638 to Ser-645 contributes to the ATP binding site. Residues Cys-737 to Cys-763 form a C4-type zinc finger.

The protein belongs to the ABC transporter superfamily. UvrA family. As to quaternary structure, forms a heterotetramer with UvrB during the search for lesions.

The protein resides in the cytoplasm. Functionally, the UvrABC repair system catalyzes the recognition and processing of DNA lesions. UvrA is an ATPase and a DNA-binding protein. A damage recognition complex composed of 2 UvrA and 2 UvrB subunits scans DNA for abnormalities. When the presence of a lesion has been verified by UvrB, the UvrA molecules dissociate. This Leptospira interrogans serogroup Icterohaemorrhagiae serovar copenhageni (strain Fiocruz L1-130) protein is UvrABC system protein A.